Reading from the N-terminus, the 564-residue chain is Pyruvate decarboxylase (564 aa).

Pyruvate-binding residues include Asp-28 and His-115. Thiamine diphosphate contacts are provided by residues Thr-390 and 413 to 415 (GSI). Asp-444 serves as a coordination point for Mg(2+). Thiamine diphosphate is bound by residues 445 to 446 (GS) and 471 to 476 (NDGYTI). 2 residues coordinate Mg(2+): Asn-471 and Gly-473. Glu-477 serves as a coordination point for pyruvate.

This sequence belongs to the TPP enzyme family. In terms of assembly, homotetramer. Mg(2+) is required as a cofactor. Requires thiamine diphosphate as cofactor.

It catalyses the reaction a 2-oxocarboxylate + H(+) = an aldehyde + CO2. The catalysed reaction is pyruvate + H(+) = acetaldehyde + CO2. In Kluyveromyces marxianus (Yeast), this protein is Pyruvate decarboxylase (PDC1).